We begin with the raw amino-acid sequence, 185 residues long: Capsid protein (185 aa).

Positions 136 to 185 (NAPILSTLPETTVVRRRDRGRSPRRRTPSPRRRRSQSPRRRRSQSRESQC) are disordered. Positions 149-178 (VRRRDRGRSPRRRTPSPRRRRSQSPRRRRS) are enriched in basic residues. S157, S164, and S172 each carry phosphoserine; by host. Residues 157–163 (SPRRRTP) form a 1; half-length repeat. The interval 157 to 179 (SPRRRTPSPRRRRSQSPRRRRSQ) is 3 X 8 AA repeats of S-P-R-R-R-[PR]-S-Q. A Bipartite nuclear localization signal motif is present at residues 160-177 (RRTPSPRRRRSQSPRRRR). 2 tandem repeats follow at residues 164–171 (SPRRRRSQ) and 172–179 (SPRRRRSQ). The interval 179-185 (QSRESQC) is RNA binding.

Belongs to the orthohepadnavirus core antigen family. In terms of assembly, homodimerizes, then multimerizes. Interacts with cytosol exposed regions of viral L glycoprotein present in the reticulum-to-Golgi compartment. Interacts with human FLNB. Phosphorylated form interacts with host importin alpha; this interaction depends on the exposure of the NLS, which itself depends upon genome maturation and/or phosphorylation of the capsid protein. Interacts with host NUP153. Post-translationally, phosphorylated by host SRPK1, SRPK2, and maybe protein kinase C or GAPDH. Phosphorylation is critical for pregenomic RNA packaging. Protein kinase C phosphorylation is stimulated by HBx protein and may play a role in transport of the viral genome to the nucleus at the late step during the viral replication cycle.

Its subcellular location is the virion. The protein resides in the host cytoplasm. Functionally, self assembles to form an icosahedral capsid. Most capsids appear to be large particles with an icosahedral symmetry of T=4 and consist of 240 copies of capsid protein, though a fraction forms smaller T=3 particles consisting of 180 capsid proteins. Entering capsids are transported along microtubules to the nucleus. Phosphorylation of the capsid is thought to induce exposure of nuclear localization signal in the C-terminal portion of the capsid protein that allows binding to the nuclear pore complex via the importin (karyopherin-) alpha and beta. Capsids are imported in intact form through the nuclear pore into the nuclear basket, where it probably binds NUP153. Only capsids that contain the mature viral genome can release the viral DNA and capsid protein into the nucleoplasm. Immature capsids get stuck in the basket. Capsids encapsulate the pre-genomic RNA and the P protein. Pre-genomic RNA is reverse-transcribed into DNA while the capsid is still in the cytoplasm. The capsid can then either be directed to the nucleus, providing more genomes for transcription, or bud through the endoplasmic reticulum to provide new virions. The polypeptide is Capsid protein (Homo sapiens (Human)).